The sequence spans 175 residues: NADH-ubiquinone oxidoreductase chain 6 (175 aa).

Transmembrane regions (helical) follow at residues 1–21 (MMYTVFVMSVLFVVGFVGVSS), 24–44 (SPVYGGLGLVASGGVGCGIVV), 46–66 (FGGSFLGLMVFLVYLGGMMVV), 86–106 (IVVLGALVGGLLMEGAAVVYL), and 149–169 (YGCWFMVMSGWMLFISVFIVI).

It belongs to the complex I subunit 6 family. As to quaternary structure, core subunit of respiratory chain NADH dehydrogenase (Complex I) which is composed of 45 different subunits.

The protein resides in the mitochondrion inner membrane. It carries out the reaction a ubiquinone + NADH + 5 H(+)(in) = a ubiquinol + NAD(+) + 4 H(+)(out). Functionally, core subunit of the mitochondrial membrane respiratory chain NADH dehydrogenase (Complex I) which catalyzes electron transfer from NADH through the respiratory chain, using ubiquinone as an electron acceptor. Essential for the catalytic activity and assembly of complex I. The chain is NADH-ubiquinone oxidoreductase chain 6 (MT-ND6) from Dugong dugon (Dugong).